A 984-amino-acid polypeptide reads, in one-letter code: uncharacterized protein (984 aa).

This is an uncharacterized protein from Ostreid herpesvirus 1 (isolate France) (OsHV-1).